The sequence spans 397 residues: CCA-adding enzyme (397 aa).

Residues glycine 26 and arginine 29 each contribute to the ATP site. CTP-binding residues include glycine 26 and arginine 29. Residues aspartate 39 and aspartate 41 each coordinate Mg(2+). ATP contacts are provided by arginine 110, aspartate 153, arginine 156, arginine 159, and arginine 162. CTP-binding residues include arginine 110, aspartate 153, arginine 156, arginine 159, and arginine 162.

It belongs to the tRNA nucleotidyltransferase/poly(A) polymerase family. Bacterial CCA-adding enzyme type 3 subfamily. As to quaternary structure, homodimer. The cofactor is Mg(2+).

The catalysed reaction is a tRNA precursor + 2 CTP + ATP = a tRNA with a 3' CCA end + 3 diphosphate. It catalyses the reaction a tRNA with a 3' CCA end + 2 CTP + ATP = a tRNA with a 3' CCACCA end + 3 diphosphate. Catalyzes the addition and repair of the essential 3'-terminal CCA sequence in tRNAs without using a nucleic acid template. Adds these three nucleotides in the order of C, C, and A to the tRNA nucleotide-73, using CTP and ATP as substrates and producing inorganic pyrophosphate. tRNA 3'-terminal CCA addition is required both for tRNA processing and repair. Also involved in tRNA surveillance by mediating tandem CCA addition to generate a CCACCA at the 3' terminus of unstable tRNAs. While stable tRNAs receive only 3'-terminal CCA, unstable tRNAs are marked with CCACCA and rapidly degraded. In Bacillus thuringiensis subsp. konkukian (strain 97-27), this protein is CCA-adding enzyme.